The chain runs to 411 residues: Serine hydroxymethyltransferase (411 aa).

120 to 122 (GHL) provides a ligand contact to (6S)-5,6,7,8-tetrahydrofolate. Position 225 is an N6-(pyridoxal phosphate)lysine (Lys-225). 350-352 (SPF) lines the (6S)-5,6,7,8-tetrahydrofolate pocket.

It belongs to the SHMT family. In terms of assembly, homodimer. It depends on pyridoxal 5'-phosphate as a cofactor.

It is found in the cytoplasm. The catalysed reaction is (6R)-5,10-methylene-5,6,7,8-tetrahydrofolate + glycine + H2O = (6S)-5,6,7,8-tetrahydrofolate + L-serine. It functions in the pathway one-carbon metabolism; tetrahydrofolate interconversion. It participates in amino-acid biosynthesis; glycine biosynthesis; glycine from L-serine: step 1/1. Functionally, catalyzes the reversible interconversion of serine and glycine with tetrahydrofolate (THF) serving as the one-carbon carrier. This reaction serves as the major source of one-carbon groups required for the biosynthesis of purines, thymidylate, methionine, and other important biomolecules. Also exhibits THF-independent aldolase activity toward beta-hydroxyamino acids, producing glycine and aldehydes, via a retro-aldol mechanism. The sequence is that of Serine hydroxymethyltransferase from Lactobacillus gasseri (strain ATCC 33323 / DSM 20243 / BCRC 14619 / CIP 102991 / JCM 1131 / KCTC 3163 / NCIMB 11718 / NCTC 13722 / AM63).